Consider the following 472-residue polypeptide: uncharacterized protein (472 aa).

It belongs to the AllG family.

This is an uncharacterized protein from Escherichia coli (strain K12).